The chain runs to 674 residues: UvrABC system protein B (674 aa).

Residues 26–414 enclose the Helicase ATP-binding domain; it reads EGLDSGLAHQ…SGNDIAEQVV (389 aa). 39 to 46 serves as a coordination point for ATP; it reads GVTGSGKT. Positions 92–115 match the Beta-hairpin motif; it reads YYDYYQPEAYVPTTDTFIEKDASV. The region spanning 432 to 586 is the Helicase C-terminal domain; that stretch reads QVDDLLSEIR…ALHNKKNGIT (155 aa). Positions 634 to 669 constitute a UVR domain; sequence ELEIQRLETEMYDLAQNLEFEKAAEARDKIHTLRQQ.

It belongs to the UvrB family. In terms of assembly, forms a heterotetramer with UvrA during the search for lesions. Interacts with UvrC in an incision complex.

Its subcellular location is the cytoplasm. Its function is as follows. The UvrABC repair system catalyzes the recognition and processing of DNA lesions. A damage recognition complex composed of 2 UvrA and 2 UvrB subunits scans DNA for abnormalities. Upon binding of the UvrA(2)B(2) complex to a putative damaged site, the DNA wraps around one UvrB monomer. DNA wrap is dependent on ATP binding by UvrB and probably causes local melting of the DNA helix, facilitating insertion of UvrB beta-hairpin between the DNA strands. Then UvrB probes one DNA strand for the presence of a lesion. If a lesion is found the UvrA subunits dissociate and the UvrB-DNA preincision complex is formed. This complex is subsequently bound by UvrC and the second UvrB is released. If no lesion is found, the DNA wraps around the other UvrB subunit that will check the other stand for damage. The sequence is that of UvrABC system protein B from Photobacterium profundum (strain SS9).